The following is a 468-amino-acid chain: Probable ubiquitin carboxyl-terminal hydrolase R319 (468 aa).

One can recognise a USP domain in the interval 42 to 462 (TGIMNLGNTC…NAYILFYIRS (421 aa)). Cysteine 51 serves as the catalytic Nucleophile. The active-site Proton acceptor is histidine 420.

Belongs to the peptidase C19 family.

It carries out the reaction Thiol-dependent hydrolysis of ester, thioester, amide, peptide and isopeptide bonds formed by the C-terminal Gly of ubiquitin (a 76-residue protein attached to proteins as an intracellular targeting signal).. This chain is Probable ubiquitin carboxyl-terminal hydrolase R319, found in Acanthamoeba polyphaga (Amoeba).